The primary structure comprises 343 residues: S-adenosylmethionine:tRNA ribosyltransferase-isomerase (343 aa).

Belongs to the QueA family. In terms of assembly, monomer.

It localises to the cytoplasm. It carries out the reaction 7-aminomethyl-7-carbaguanosine(34) in tRNA + S-adenosyl-L-methionine = epoxyqueuosine(34) in tRNA + adenine + L-methionine + 2 H(+). It participates in tRNA modification; tRNA-queuosine biosynthesis. Its function is as follows. Transfers and isomerizes the ribose moiety from AdoMet to the 7-aminomethyl group of 7-deazaguanine (preQ1-tRNA) to give epoxyqueuosine (oQ-tRNA). This Natranaerobius thermophilus (strain ATCC BAA-1301 / DSM 18059 / JW/NM-WN-LF) protein is S-adenosylmethionine:tRNA ribosyltransferase-isomerase.